We begin with the raw amino-acid sequence, 97 residues long: Small ribosomal subunit protein bS20 (97 aa).

The segment covering R76–G85 has biased composition (basic residues). A disordered region spans residues R76–S97. The segment covering L86–S97 has biased composition (low complexity).

Belongs to the bacterial ribosomal protein bS20 family.

Binds directly to 16S ribosomal RNA. This chain is Small ribosomal subunit protein bS20, found in Microcystis aeruginosa (strain NIES-843 / IAM M-2473).